A 181-amino-acid chain; its full sequence is Large ribosomal subunit protein uL16 (181 aa).

It belongs to the universal ribosomal protein uL16 family.

The protein is Large ribosomal subunit protein uL16 of Pyrococcus horikoshii (strain ATCC 700860 / DSM 12428 / JCM 9974 / NBRC 100139 / OT-3).